The following is a 317-amino-acid chain: Hps1-dma1 cluster cytochrome P450 monooxygenase cyp3.1 (317 aa).

Residues 183–205 (PAIETDRKTSSHSRSPTALADKQ) are disordered. C260 is a heme binding site.

The protein belongs to the cytochrome P450 family. It depends on heme as a cofactor.

Its pathway is secondary metabolite biosynthesis. Its function is as follows. Cytochrome P450 monooxygenase; part of the hps1-dma1 gene cluster that probably mediates the biosynthesis a derivative of cyclopiazonic acid (CPA). The hybrid polyketide synthase-nonribosomal peptide synthetase (PKS-NRPS) nps1 might incorporates acetyl-CoA, malonyl-CoA, and tryptophan (Trp) and utilizes a C-terminal redox-incompetent reductase domain to make and release the tryptophan tetramic acid, cyclo-acetoacetyl-L-tryptophan (c-AATrp), as the first intermediate in the pathway. In addition, the cluster also includes the tryptophan dimethylallyltransferase dma1, the FAD-dependent oxidoreductase toxD, the cytochrome P450 monooxygenase cyp3.1 and the methyltransferase DOTSEDRAFT_139328; the latter 2 being not present in all CPA-producing fungi but involved in additional modifications that occur in biosynthesis the of a range of CPA and CPA-like products. Further studies are required to clarify whether the CPA-like hps1-dma1 cluster is functional or a non-functional relic reflecting evolution of D.septosporum. This Dothistroma septosporum (strain NZE10 / CBS 128990) (Red band needle blight fungus) protein is Hps1-dma1 cluster cytochrome P450 monooxygenase cyp3.1 (cyp3.1).